The following is a 549-amino-acid chain: Cation/acetate symporter ActP (549 aa).

13 consecutive transmembrane segments (helical) span residues 33–53, 77–97, 103–123, 148–168, 183–203, 206–226, 262–282, 303–323, 355–375, 404–424, 428–448, 464–484, and 493–513; these read WQAI…TYWA, LAIA…ALVF, GLIY…LIAE, ILSA…QMVG, IAVV…GMLA, WVQI…AFMV, ISAL…PHIL, GFMG…IMLV, LFLG…VAGL, VSKI…VLFE, IAFM…PIIL, GGWL…TIWV, and IFPY…GIWF.

Belongs to the sodium:solute symporter (SSF) (TC 2.A.21) family.

Its subcellular location is the cell inner membrane. Its function is as follows. Transports acetate. The polypeptide is Cation/acetate symporter ActP (Escherichia coli (strain ATCC 8739 / DSM 1576 / NBRC 3972 / NCIMB 8545 / WDCM 00012 / Crooks)).